We begin with the raw amino-acid sequence, 482 residues long: Putative ankyrin repeat protein FPV232 (482 aa).

ANK repeat units follow at residues 36 to 65 (IPLI…NVNE), 69 to 100 (RYLT…DLSS), 101 to 128 (YEER…DGNR), 129 to 161 (TIDD…DTKI), 166 to 195 (KLKT…EVNS), 199 to 228 (GNNS…NTDH), 232 to 265 (CGTT…SVNI), 270 to 297 (LGFT…DPNI), and 301 to 332 (EKET…LRAF).

The chain is Putative ankyrin repeat protein FPV232 from Fowlpox virus (strain NVSL) (FPV).